The chain runs to 789 residues: Isoamylase SU1, chloroplastic (789 aa).

Residues 1-44 (MAQQLPCVSSPRPLLAVPAGRWRAGVRGRPNVAGLGRGRLSLHA) constitute a chloroplast transit peptide. The active-site Nucleophile is the Asp417. Residue Glu473 is the Proton donor of the active site.

Belongs to the glycosyl hydrolase 13 family.

It localises to the plastid. The protein localises to the chloroplast. It catalyses the reaction Hydrolysis of (1-&gt;6)-alpha-D-glucosidic branch linkages in glycogen, amylopectin and their beta-limit dextrins.. Its pathway is glycan biosynthesis; starch biosynthesis. Isoamylase starch-debranching enzyme involved in amylopectin biosynthesis in endosperm. Functions by removing excess branches or improper branches that interfere with the formation of double helices of the cluster chains of amylopectin and crystallization of starch. This chain is Isoamylase SU1, chloroplastic, found in Zea mays (Maize).